We begin with the raw amino-acid sequence, 472 residues long: MHSNVYLPETFLEKIKTILPSALNMDDFIAYCQQPLRKSIRVNTLKISVDAFLTIAQEKGWTLHPVPWCETGFWIEADESKVPLGNTAEHMCGLFYIQEASSMMPVSALFLGENQFESVLDTAAAPGSKTTQIAALMNNQGILVANEYAASRVKVLHANIERCGVRNAALSNFDGRVFGGWLPESFDAVLLDAPCSGEGTVRKDEDAMKNWSQESVLEIAATQKDLIESAFQALKPGGVMVYSTCTLSEEENQQVCHHLKHTFGDAVAFESLSSLFDGAEKALTEDGFLHIFPQVYDSEGFFVARIRKLASVNSPDVNKKMGKFPFQKASKKESALIEKSLSDSLDISLPADSTIWLRDNDVWLFPNALEPMLGELRFSRMGIKLAEKHKNGYRWQHQIATTLASGDEKTVVDIDTDAAREWFMGRDIYPENSGKGEVFVRYQGAIIGLGKWVSNKIKNGLPRELVRDKNLF.

Residues 123-129 (AAAPGSK), glutamate 147, aspartate 174, and aspartate 192 contribute to the S-adenosyl-L-methionine site. The active-site Nucleophile is the cysteine 245.

This sequence belongs to the class I-like SAM-binding methyltransferase superfamily. RsmB/NOP family.

The protein resides in the cytoplasm. It catalyses the reaction cytidine(1407) in 16S rRNA + S-adenosyl-L-methionine = 5-methylcytidine(1407) in 16S rRNA + S-adenosyl-L-homocysteine + H(+). In terms of biological role, specifically methylates the cytosine at position 1407 (m5C1407) of 16S rRNA. This is Ribosomal RNA small subunit methyltransferase F from Vibrio vulnificus (strain CMCP6).